Reading from the N-terminus, the 259-residue chain is Cell division protein FtsQ (259 aa).

Residues 1 to 15 (MTRDQTATFGRHALR) are Cytoplasmic-facing. Residues 16–36 (VAGSGLLVAGVVALGLLGWQW) form a helical membrane-spanning segment. Residues 37 to 259 (RANVTVDRVA…VVTRTRPLDG (223 aa)) lie on the Periplasmic side of the membrane. A POTRA domain is found at 40–109 (VTVDRVAVTG…GALTISVTER (70 aa)).

It belongs to the FtsQ/DivIB family. FtsQ subfamily.

Its subcellular location is the cell inner membrane. Functionally, essential cell division protein. This is Cell division protein FtsQ from Salinibacter ruber (strain DSM 13855 / M31).